Reading from the N-terminus, the 687-residue chain is Glycine--tRNA ligase beta subunit (687 aa).

This sequence belongs to the class-II aminoacyl-tRNA synthetase family. As to quaternary structure, tetramer of two alpha and two beta subunits.

The protein resides in the cytoplasm. The catalysed reaction is tRNA(Gly) + glycine + ATP = glycyl-tRNA(Gly) + AMP + diphosphate. The chain is Glycine--tRNA ligase beta subunit from Geobacter sp. (strain M21).